We begin with the raw amino-acid sequence, 90 residues long: Acylphosphatase (90 aa).

In terms of domain architecture, Acylphosphatase-like spans Lys-3–Tyr-90. Catalysis depends on residues Arg-18 and Asn-36.

Belongs to the acylphosphatase family.

The catalysed reaction is an acyl phosphate + H2O = a carboxylate + phosphate + H(+). The protein is Acylphosphatase (acyP) of Pasteurella multocida (strain Pm70).